We begin with the raw amino-acid sequence, 556 residues long: Large cysteine-rich periplasmic protein OmcB (556 aa).

Residues M1–A22 form the signal peptide. The propeptide occupies S23–A40.

In terms of assembly, part of a disulfide cross-linked outer membrane complex (COMC) composed of the major outer membrane porin (MOMP), the small cysteine-rich protein (OmcA) and the large cysteine-rich periplasmic protein (OmcB).

It localises to the periplasm. In terms of biological role, in elementary bodies (EBs, the infectious stage, which is able to survive outside the host cell) provides the structural integrity of the outer envelope through disulfide cross-links with the small cysteine-rich protein and the major outer membrane porin. It has been described in publications as the Sarkosyl-insoluble COMC (Chlamydia outer membrane complex), and serves as the functional equivalent of peptidoglycan. The sequence is that of Large cysteine-rich periplasmic protein OmcB (omcB) from Chlamydia pneumoniae (Chlamydophila pneumoniae).